We begin with the raw amino-acid sequence, 493 residues long: MTELNKLTVADSVKGLKNKDFTSKELVNAHIKQIEKHKNLNAYVTETFDLALKQAEAADQNYAQNQPQTLEGIPFAAKDLFCTKGIRTTACSNILKNFIPNYESSVTQNIFDKGGVMLGKTNMDEFAMGSANITSCFGNVISPWKANDDNADLVPGGSSGGSAAAVSGFMASAALGSDTGGSVRQPASFTGLVGFKPTYGRCSRYGMVSFASSLDQAGIFTRSVLDSSIMLEAMMGFDEKDSTSIKAEVPELQSAIGSSMKNMKIGVPLSLGEGGIIEPDIMKMWQDTIELLKNAGAEIVDITLPHAKYGVAVYYVIAPAEASSNLSRYDGVRYGLRVERENMTLDEMYEMTRSAGFGEEVKRRIMIGTYVLSSSCMDAYYLKAQKVRRLVANDFNNAFAKVDAILLPAAPTEAFKIGEKQNDPTIMYLNDLFTIPASLAGLPCASVPAGLSARGLPLGMQIIGKQLDEYNVLKVASTIESGVKHIKFEPKGF.

Residues K78 and S158 each act as charge relay system in the active site. Residue S182 is the Acyl-ester intermediate of the active site.

It belongs to the amidase family. GatA subfamily. As to quaternary structure, heterotrimer of A, B and C subunits.

It catalyses the reaction L-glutamyl-tRNA(Gln) + L-glutamine + ATP + H2O = L-glutaminyl-tRNA(Gln) + L-glutamate + ADP + phosphate + H(+). Its function is as follows. Allows the formation of correctly charged Gln-tRNA(Gln) through the transamidation of misacylated Glu-tRNA(Gln) in organisms which lack glutaminyl-tRNA synthetase. The reaction takes place in the presence of glutamine and ATP through an activated gamma-phospho-Glu-tRNA(Gln). This chain is Glutamyl-tRNA(Gln) amidotransferase subunit A, found in Rickettsia felis (strain ATCC VR-1525 / URRWXCal2) (Rickettsia azadi).